The following is a 529-amino-acid chain: Serine hydroxymethyltransferase 3, chloroplastic (529 aa).

The transit peptide at 1-60 (MQACCGGNSMASLQQPGRVQGSVFPPIMPPVTKFSQQLKFNISKPFRSSFLKRNLVSEMR) directs the protein to the chloroplast. An N6-(pyridoxal phosphate)lysine modification is found at lysine 314.

The protein belongs to the SHMT family. As to quaternary structure, homotetramer. Pyridoxal 5'-phosphate serves as cofactor.

The protein localises to the plastid. It localises to the chloroplast. It catalyses the reaction (6R)-5,10-methylene-5,6,7,8-tetrahydrofolate + glycine + H2O = (6S)-5,6,7,8-tetrahydrofolate + L-serine. It functions in the pathway one-carbon metabolism; tetrahydrofolate interconversion. Its activity is regulated as follows. Inhibited by 5-CH3-H4PteGlu1/5 and 5-HCO-H4PteGlu1/5 in vitro. Its function is as follows. Catalyzes the interconversion of serine and glycine and directs the hydroxymethyl moiety of serine into the metabolic network of H4PteGlu(n)-bound one-carbon units. In Arabidopsis thaliana (Mouse-ear cress), this protein is Serine hydroxymethyltransferase 3, chloroplastic.